A 359-amino-acid chain; its full sequence is Cytochrome c oxidase subunit 2 (359 aa).

The N-terminal stretch at 1 to 28 (MEQQNKRGLKRKALLGGVLGLGGLAMAG) is a signal peptide. Residue C29 is the site of S-diacylglycerol cysteine attachment. Transmembrane regions (helical) follow at residues 64–84 (VWVAAWIIGIIMWGLFLTAIF) and 107–127 (VPLELVLTIVPIIIVMVLFFF). Positions 168–203 (PGGQDYQGSDPERQAAAEASKKDPSGDNPIHGNSKS) are disordered. The span at 177-192 (DPERQAAAEASKKDPS) shows a compositional bias: basic and acidic residues. Cu cation is bound by residues H244, C285, E287, C289, H293, and M296. Residues 335–359 (YATSTSPFVSDRTATRDGENTQSNA) form a disordered region.

As to quaternary structure, associates with subunits I, III and IV to form cytochrome c oxidase. The 4 subunit cytochrome c oxidase forms a supercomplex with the menaquinol-cytochrome c reductase complex (cytochrome bc1). Binuclear copper center (CuA) is required as a cofactor.

The protein resides in the cell membrane. The enzyme catalyses 4 Fe(II)-[cytochrome c] + O2 + 8 H(+)(in) = 4 Fe(III)-[cytochrome c] + 2 H2O + 4 H(+)(out). Functionally, subunits I and II form the functional core of the enzyme complex. Electrons originating in cytochrome c are transferred via heme a and Cu(A) to the binuclear center formed by heme a3 and Cu(B). The protein is Cytochrome c oxidase subunit 2 (ctaC) of Corynebacterium glutamicum (strain ATCC 13032 / DSM 20300 / JCM 1318 / BCRC 11384 / CCUG 27702 / LMG 3730 / NBRC 12168 / NCIMB 10025 / NRRL B-2784 / 534).